Reading from the N-terminus, the 105-residue chain is Large ribosomal subunit protein uL24 (105 aa).

It belongs to the universal ribosomal protein uL24 family. In terms of assembly, part of the 50S ribosomal subunit.

In terms of biological role, one of two assembly initiator proteins, it binds directly to the 5'-end of the 23S rRNA, where it nucleates assembly of the 50S subunit. One of the proteins that surrounds the polypeptide exit tunnel on the outside of the subunit. This is Large ribosomal subunit protein uL24 from Cellvibrio japonicus (strain Ueda107) (Pseudomonas fluorescens subsp. cellulosa).